The chain runs to 310 residues: tRNA uridine(34) hydroxylase (310 aa).

Residues 123–217 (ADPDVVVIDV…YLEKVPEDES (95 aa)) form the Rhodanese domain. Residue Cys-177 is the Cysteine persulfide intermediate of the active site.

The protein belongs to the TrhO family.

The enzyme catalyses uridine(34) in tRNA + AH2 + O2 = 5-hydroxyuridine(34) in tRNA + A + H2O. Catalyzes oxygen-dependent 5-hydroxyuridine (ho5U) modification at position 34 in tRNAs. The polypeptide is tRNA uridine(34) hydroxylase (Acaryochloris marina (strain MBIC 11017)).